The following is a 403-amino-acid chain: Acetylornithine aminotransferase (403 aa).

Pyridoxal 5'-phosphate-binding positions include 107-108 (GA) and phenylalanine 140. A N(2)-acetyl-L-ornithine-binding site is contributed by arginine 143. 225-228 (DEVQ) is a binding site for pyridoxal 5'-phosphate. N6-(pyridoxal phosphate)lysine is present on lysine 254. Residue serine 282 participates in N(2)-acetyl-L-ornithine binding. Threonine 283 lines the pyridoxal 5'-phosphate pocket.

This sequence belongs to the class-III pyridoxal-phosphate-dependent aminotransferase family. ArgD subfamily. In terms of assembly, homodimer. Pyridoxal 5'-phosphate serves as cofactor.

Its subcellular location is the cytoplasm. The enzyme catalyses N(2)-acetyl-L-ornithine + 2-oxoglutarate = N-acetyl-L-glutamate 5-semialdehyde + L-glutamate. The protein operates within amino-acid biosynthesis; L-arginine biosynthesis; N(2)-acetyl-L-ornithine from L-glutamate: step 4/4. This chain is Acetylornithine aminotransferase, found in Vibrio cholerae serotype O1 (strain ATCC 39315 / El Tor Inaba N16961).